A 302-amino-acid chain; its full sequence is MKLFEDLQWRGLVKQYSSDSLIEKLNNGKLTFYIGTDPTADSLHLGHYSSFLIAKRLAKYGHQPIILIGGATALVGDPRGTSERDLAEQEKIFDNFEKLKNQIQKIFPYEIVNNYDWTKNIMAIDFLREFGKHITAGYMSNKELVKRQFATGISFTEFSYMLLQGMDFYHLFTTKGVTLQIAGSDQWGNMTTGIDLVRKKTGEEVFAMTMPLITDEEGKKFGKSEGNAIWISENKNTPEELHNFLLNVSDDIVISLLKKLTFLSRKDIEEIESRHKNGTGYAQGILADTVTFDIHGVSINKK.

Y33 contributes to the L-tyrosine binding site. The 'HIGH' region signature appears at 38-47; sequence PTADSLHLGH. 2 residues coordinate L-tyrosine: Y160 and Q164. The 'KMSKS' region motif lies at 220 to 224; the sequence is KFGKS. Position 223 (K223) interacts with ATP.

It belongs to the class-I aminoacyl-tRNA synthetase family. TyrS type 1 subfamily. In terms of assembly, homodimer.

It is found in the cytoplasm. It carries out the reaction tRNA(Tyr) + L-tyrosine + ATP = L-tyrosyl-tRNA(Tyr) + AMP + diphosphate + H(+). Catalyzes the attachment of tyrosine to tRNA(Tyr) in a two-step reaction: tyrosine is first activated by ATP to form Tyr-AMP and then transferred to the acceptor end of tRNA(Tyr). In Streptococcus thermophilus (strain CNRZ 1066), this protein is Tyrosine--tRNA ligase 2 (tyrS2).